The sequence spans 434 residues: Glutamate-1-semialdehyde 2,1-aminomutase 1 (434 aa).

Lys-270 bears the N6-(pyridoxal phosphate)lysine mark.

Belongs to the class-III pyridoxal-phosphate-dependent aminotransferase family. HemL subfamily. As to quaternary structure, homodimer. The cofactor is pyridoxal 5'-phosphate.

It localises to the cytoplasm. The enzyme catalyses (S)-4-amino-5-oxopentanoate = 5-aminolevulinate. Its pathway is porphyrin-containing compound metabolism; protoporphyrin-IX biosynthesis; 5-aminolevulinate from L-glutamyl-tRNA(Glu): step 2/2. This is Glutamate-1-semialdehyde 2,1-aminomutase 1 from Bacillus cereus (strain AH187).